Here is a 437-residue protein sequence, read N- to C-terminus: Probable D-serine dehydratase (437 aa).

Lys106 carries the post-translational modification N6-(pyridoxal phosphate)lysine.

Belongs to the serine/threonine dehydratase family. DsdA subfamily. Requires pyridoxal 5'-phosphate as cofactor.

It catalyses the reaction D-serine = pyruvate + NH4(+). The chain is Probable D-serine dehydratase from Hahella chejuensis (strain KCTC 2396).